The primary structure comprises 204 residues: Holliday junction branch migration complex subunit RuvA (204 aa).

The segment at 1–64 (MIAQIRGKLI…QDSILLVGFC (64 aa)) is domain I. Residues 65–143 (TENEKQLFKL…GWTSKEQITF (79 aa)) are domain II. The interval 144–154 (INNKKDAIDQS) is flexible linker. The tract at residues 154-204 (SVMEEDAISALINLGYKSQAAKDAIDRVISEGGENKSLDVILKKALKVLAM) is domain III.

The protein belongs to the RuvA family. As to quaternary structure, homotetramer. Forms an RuvA(8)-RuvB(12)-Holliday junction (HJ) complex. HJ DNA is sandwiched between 2 RuvA tetramers; dsDNA enters through RuvA and exits via RuvB. An RuvB hexamer assembles on each DNA strand where it exits the tetramer. Each RuvB hexamer is contacted by two RuvA subunits (via domain III) on 2 adjacent RuvB subunits; this complex drives branch migration. In the full resolvosome a probable DNA-RuvA(4)-RuvB(12)-RuvC(2) complex forms which resolves the HJ.

It localises to the cytoplasm. The RuvA-RuvB-RuvC complex processes Holliday junction (HJ) DNA during genetic recombination and DNA repair, while the RuvA-RuvB complex plays an important role in the rescue of blocked DNA replication forks via replication fork reversal (RFR). RuvA specifically binds to HJ cruciform DNA, conferring on it an open structure. The RuvB hexamer acts as an ATP-dependent pump, pulling dsDNA into and through the RuvAB complex. HJ branch migration allows RuvC to scan DNA until it finds its consensus sequence, where it cleaves and resolves the cruciform DNA. This chain is Holliday junction branch migration complex subunit RuvA, found in Syntrophus aciditrophicus (strain SB).